Reading from the N-terminus, the 260-residue chain is MAKDDSSVRCFQGLLIFGNVIVGMCGIALTAECIFFVSDQHSLYPLLEATDNDDIYGAAWIGMFVGICLFCLSVLGIVGIMKSNRKILLAYFILMFIVYGFEVASCITAATQRDFFTPNLFLKQMLERYQNNSPPNNDDQWKNNGVTKTWDRLMLQDHCCGVNGPSDWQRYTSAFRTANNDADYPWPRQCCVMNSLKEPLNVEACKLGVPGYYHKEGCYELISGPMNRHAWGVAWFGFAILCWTFWVLLGTMFYWSRIEY.

Topologically, residues 1–12 (MAKDDSSVRCFQ) are cytoplasmic. Residues 13–38 (GLLIFGNVIVGMCGIALTAECIFFVS) form a helical membrane-spanning segment. Over 39-60 (DQHSLYPLLEATDNDDIYGAAW) the chain is Extracellular. A helical transmembrane segment spans residues 61-81 (IGMFVGICLFCLSVLGIVGIM). At 82–86 (KSNRK) the chain is on the cytoplasmic side. A helical membrane pass occupies residues 87-107 (ILLAYFILMFIVYGFEVASCI). At 108–229 (TAATQRDFFT…ELISGPMNRH (122 aa)) the chain is on the extracellular side. A helical transmembrane segment spans residues 230-250 (AWGVAWFGFAILCWTFWVLLG). Residues 251 to 260 (TMFYWSRIEY) lie on the Cytoplasmic side of the membrane.

The protein belongs to the tetraspanin (TM4SF) family. As to quaternary structure, heterodimer with uroplakin-3A (UPK3A) or uroplakin-3B (UPK3B).

It is found in the membrane. Component of the asymmetric unit membrane (AUM); a highly specialized biomembrane elaborated by terminally differentiated urothelial cells. The polypeptide is Uroplakin-1b (UPK1B) (Neovison vison (American mink)).